A 724-amino-acid chain; its full sequence is Eukaryotic elongation factor 2 kinase (724 aa).

Alanine 2 bears the N-acetylalanine mark. The interval glutamate 11 to glutamate 35 is disordered. Positions valine 13–glycine 22 are enriched in gly residues. Phosphoserine is present on residues serine 18, serine 27, serine 70, and serine 73. Serine 77 bears the Phosphoserine; by autocatalysis and TRPM7 mark. A calmodulin-binding region spans residues phenylalanine 80–histidine 93. Positions arginine 115–phenylalanine 325 constitute an Alpha-type protein kinase domain. Serine 242 is subject to Phosphoserine. Residue glycine 295–valine 301 coordinates ATP. Threonine 347 is modified (phosphothreonine). Threonine 352 is modified (phosphothreonine; by autocatalysis). The segment at glutamate 353–serine 476 is disordered. Serine 358 carries the post-translational modification Phosphoserine; by MAPK13 and CDK1. Low complexity predominate over residues leucine 364–serine 376. Phosphoserine occurs at positions 365 and 391. A compositionally biased stretch (polar residues) spans serine 385–serine 403. Serine 397 carries the post-translational modification Phosphoserine; by AMPK. Composition is skewed to basic and acidic residues over residues glycine 421 to glutamate 435 and serine 444 to glutamate 468. Serine 434, serine 444, serine 469, serine 473, and serine 476 each carry phosphoserine. Phosphoserine; by PKA is present on serine 499.

It belongs to the protein kinase superfamily. Alpha-type protein kinase family. As to quaternary structure, monomer or homodimer. Interacts with Calmodulin/CALM1; this interaction is strictly required for phosphorylation activity. The N-terminus is blocked. In terms of processing, autophosphorylated at multiple residues, Thr-347 being the major site. Phosphorylated by AMP-activated protein kinase AMPK at Ser-397 leading to EEF2K activation and protein synthesis inhibition. Phosphorylated by TRPM7 at Ser-77 resulting in improved protein stability, higher EE2F phosphorylated and subsequently reduced rate of protein synthesis. Phosphorylation by other kinases such as CDK1 and MAPK13 at Ser-358 or RPS6KA1 and RPS6KB1 at Ser-365 instead decrease EEF2K activity and promote protein synthesis. As to expression, widely expressed, with high levels in reticulocytes and skeletal muscle.

It catalyses the reaction [translation elongation factor 2] + ATP = [translation elongation factor 2]-phosphate + ADP + H(+). With respect to regulation, undergoes calcium/calmodulin-dependent intramolecular autophosphorylation, and this results in it becoming partially calcium/calmodulin-independent. In terms of biological role, threonine kinase that regulates protein synthesis by controlling the rate of peptide chain elongation. Upon activation by a variety of upstream kinases including AMPK or TRPM7, phosphorylates the elongation factor EEF2 at a single site, renders it unable to bind ribosomes and thus inactive. In turn, the rate of protein synthesis is reduced. This chain is Eukaryotic elongation factor 2 kinase, found in Rattus norvegicus (Rat).